The following is a 123-amino-acid chain: UPF0102 protein Pput_4400 (123 aa).

It belongs to the UPF0102 family.

This chain is UPF0102 protein Pput_4400, found in Pseudomonas putida (strain ATCC 700007 / DSM 6899 / JCM 31910 / BCRC 17059 / LMG 24140 / F1).